We begin with the raw amino-acid sequence, 511 residues long: Histidine ammonia-lyase (511 aa).

Positions 142 to 144 (ASG) form a cross-link, 5-imidazolinone (Ala-Gly). 2,3-didehydroalanine (Ser) is present on serine 143.

The protein belongs to the PAL/histidase family. Contains an active site 4-methylidene-imidazol-5-one (MIO), which is formed autocatalytically by cyclization and dehydration of residues Ala-Ser-Gly.

It is found in the cytoplasm. It catalyses the reaction L-histidine = trans-urocanate + NH4(+). The protein operates within amino-acid degradation; L-histidine degradation into L-glutamate; N-formimidoyl-L-glutamate from L-histidine: step 1/3. The protein is Histidine ammonia-lyase of Chelativorans sp. (strain BNC1).